We begin with the raw amino-acid sequence, 209 residues long: Uracil phosphoribosyltransferase (209 aa).

Residues R79, R104, and 131 to 139 contribute to the 5-phospho-alpha-D-ribose 1-diphosphate site; that span reads DPMLATGGS. Residues I194 and 199–201 each bind uracil; that span reads GDA. Residue D200 coordinates 5-phospho-alpha-D-ribose 1-diphosphate.

The protein belongs to the UPRTase family. Mg(2+) is required as a cofactor.

It carries out the reaction UMP + diphosphate = 5-phospho-alpha-D-ribose 1-diphosphate + uracil. It functions in the pathway pyrimidine metabolism; UMP biosynthesis via salvage pathway; UMP from uracil: step 1/1. Its activity is regulated as follows. Allosterically activated by GTP. In terms of biological role, catalyzes the conversion of uracil and 5-phospho-alpha-D-ribose 1-diphosphate (PRPP) to UMP and diphosphate. This chain is Uracil phosphoribosyltransferase, found in Chromohalobacter salexigens (strain ATCC BAA-138 / DSM 3043 / CIP 106854 / NCIMB 13768 / 1H11).